Reading from the N-terminus, the 334-residue chain is Holliday junction branch migration complex subunit RuvB (334 aa).

Positions 1 to 182 are large ATPase domain (RuvB-L); it reads MNERMVDQSM…FGVHLRLEYY (182 aa). Residues Leu-21, Arg-22, Gly-63, Lys-66, Thr-67, Thr-68, 129–131, Arg-172, Tyr-182, and Arg-219 contribute to the ATP site; that span reads EDF. Thr-67 serves as a coordination point for Mg(2+). The small ATPAse domain (RuvB-S) stretch occupies residues 183–253; sequence NESDLKEIII…TTKHALGLLQ (71 aa). The interval 256-334 is head domain (RuvB-H); the sequence is QHGLDYIDHK…HFAKSNEERG (79 aa). Arg-292, Arg-311, and Arg-316 together coordinate DNA.

This sequence belongs to the RuvB family. Homohexamer. Forms an RuvA(8)-RuvB(12)-Holliday junction (HJ) complex. HJ DNA is sandwiched between 2 RuvA tetramers; dsDNA enters through RuvA and exits via RuvB. An RuvB hexamer assembles on each DNA strand where it exits the tetramer. Each RuvB hexamer is contacted by two RuvA subunits (via domain III) on 2 adjacent RuvB subunits; this complex drives branch migration. In the full resolvosome a probable DNA-RuvA(4)-RuvB(12)-RuvC(2) complex forms which resolves the HJ.

It localises to the cytoplasm. The catalysed reaction is ATP + H2O = ADP + phosphate + H(+). Its function is as follows. The RuvA-RuvB-RuvC complex processes Holliday junction (HJ) DNA during genetic recombination and DNA repair, while the RuvA-RuvB complex plays an important role in the rescue of blocked DNA replication forks via replication fork reversal (RFR). RuvA specifically binds to HJ cruciform DNA, conferring on it an open structure. The RuvB hexamer acts as an ATP-dependent pump, pulling dsDNA into and through the RuvAB complex. RuvB forms 2 homohexamers on either side of HJ DNA bound by 1 or 2 RuvA tetramers; 4 subunits per hexamer contact DNA at a time. Coordinated motions by a converter formed by DNA-disengaged RuvB subunits stimulates ATP hydrolysis and nucleotide exchange. Immobilization of the converter enables RuvB to convert the ATP-contained energy into a lever motion, pulling 2 nucleotides of DNA out of the RuvA tetramer per ATP hydrolyzed, thus driving DNA branch migration. The RuvB motors rotate together with the DNA substrate, which together with the progressing nucleotide cycle form the mechanistic basis for DNA recombination by continuous HJ branch migration. Branch migration allows RuvC to scan DNA until it finds its consensus sequence, where it cleaves and resolves cruciform DNA. This Staphylococcus aureus (strain N315) protein is Holliday junction branch migration complex subunit RuvB.